A 76-amino-acid chain; its full sequence is Conotoxin TxMEKL-011 (76 aa).

Residues 1-19 (MEKLTILLLVAAVLMSTQA) form the signal peptide. The propeptide occupies 20-45 (LVERAGENRSKENIKFLLKRKRAADR). Disulfide bonds link Cys-51/Cys-65, Cys-58/Cys-69, and Cys-64/Cys-73.

This sequence belongs to the conotoxin O2 superfamily. Expressed by the venom duct.

It is found in the secreted. This Conus textile (Cloth-of-gold cone) protein is Conotoxin TxMEKL-011.